Consider the following 2238-residue polypeptide: RNA-directed RNA polymerase L (2238 aa).

The tract at residues 26–284 (ITLVTCQNDA…THHSEHPVDC (259 aa)) is endonuclease. Mn(2+)-binding residues include Glu51, Asp89, and Glu102. Lys115 is a catalytic residue. A RdRp catalytic domain is found at 1188–1387 (TDMKMCVNLG…FISTKFNKFV (200 aa)). Mg(2+) is bound at residue Asp1346.

This sequence belongs to the Bunyavirales RNA polymerase family. As to quaternary structure, homomultimer; the oligomeric structure is essential for the polymerase activity. Interacts with nucleoprotein N. Interacts with protein Z; this interaction inhibits viral transcription and replication, Z partially blocks the product exit tunnel for the releasing nascent RNA product. Mn(2+) serves as cofactor. It depends on Mg(2+) as a cofactor.

The protein localises to the virion. It localises to the host cytoplasm. It carries out the reaction RNA(n) + a ribonucleoside 5'-triphosphate = RNA(n+1) + diphosphate. In terms of biological role, RNA-dependent RNA polymerase, which is responsible for the replication and transcription of the viral RNA genome using antigenomic RNA as an intermediate. During transcription, synthesizes subgenomic RNAs and assures their capping by a cap-snatching mechanism, which involves the endonuclease activity cleaving the host capped pre-mRNAs. These short capped RNAs are then used as primers for viral transcription. The 3'-end of subgenomic mRNAs molecules are heterogeneous and not polyadenylated. The replicase function is to direct synthesis of antigenomic and genomic RNA which are encapsidated and non capped. As a consequence of the use of the same enzyme for both transcription and replication, these mechanisms need to be well coordinated. These processes may be regulated by proteins N and Z in a dose-dependent manner. Z protein inhibits the viral polymerase L und thus the viral transcription and RNA synthesis. This is RNA-directed RNA polymerase L from Calomys callosus (Large vesper mouse).